Here is a 523-residue protein sequence, read N- to C-terminus: MGNCCSHGRDSDDNKEEPRPENGGGGVGAAEASVRASKHPPASPPPATKQGPIGPVLGRPMEDVKSSYTLGKELGRGQFGVTHLCTQKATGLQFACKTIAKRKLVNKEDIEDVRREVQIMHHLTGQPNIVELKGAYEDKHSVHLVMELCAGGELFDRIIAKGHYSERAAASLLRTIVQIIHTCHSMGVIHRDLKPENFLLLSKDENSPLKATDFGLSVFYKPGEVFKDIVGSAYYIAPEVLRRKYGPEADIWSIGVMLYILLCGVPPFWAESENGIFNAILSGQVDFSSDPWPVISPQAKDLVRKMLNSDPKQRLTAAQVLNHPWIKEDGEAPDVPLDNAVMSRLKQFKAMNNFKKVALRVIAGCLSEEEIMGLKEMFKGMDTDNSGTITLEELRQGLAKQGTRLSEYEVQQLMEAADADGNGTIDYGEFIAATMHINRLDREEHLYSAFQHFDKDNSGYITTEELEQALREFGMNDGRDIKEIISEVDGDNDGRINYEEFVAMMRKGNPDPNPKKRRELSFK.

Positions 1 to 60 are disordered; that stretch reads MGNCCSHGRDSDDNKEEPRPENGGGGVGAAEASVRASKHPPASPPPATKQGPIGPVLGRP. G2 is lipidated: N-myristoyl glycine. Basic and acidic residues predominate over residues 7 to 20; the sequence is HGRDSDDNKEEPRP. One can recognise a Protein kinase domain in the interval 68–326; the sequence is YTLGKELGRG…AAQVLNHPWI (259 aa). ATP is bound by residues 74–82 and K97; that span reads LGRGQFGVT. The active-site Proton acceptor is the D192. The residue at position 232 (S232) is a Phosphoserine. The interval 332-362 is autoinhibitory domain; sequence APDVPLDNAVMSRLKQFKAMNNFKKVALRVI. 4 EF-hand domains span residues 369 to 404, 405 to 440, 441 to 476, and 480 to 511; these read EEIM…QGTR, LSEY…INRL, DREE…FGMN, and DIKE…GNPD. D382, D384, S386, T388, E393, D418, D420, N422, T424, E429, D454, D456, S458, Y460, E465, D489, D491, D493, R495, and E500 together coordinate Ca(2+).

Belongs to the protein kinase superfamily. Ser/Thr protein kinase family. CDPK subfamily.

It is found in the membrane. The catalysed reaction is L-seryl-[protein] + ATP = O-phospho-L-seryl-[protein] + ADP + H(+). It carries out the reaction L-threonyl-[protein] + ATP = O-phospho-L-threonyl-[protein] + ADP + H(+). Activated by calcium. Autophosphorylation may play an important role in the regulation of the kinase activity. Its function is as follows. May play a role in signal transduction pathways that involve calcium as a second messenger. In Arabidopsis thaliana (Mouse-ear cress), this protein is Calcium-dependent protein kinase 34 (CPK34).